Here is a 292-residue protein sequence, read N- to C-terminus: Elongation factor Ts (292 aa).

The segment at 80–83 (TDFV) is involved in Mg(2+) ion dislocation from EF-Tu.

It belongs to the EF-Ts family.

It localises to the cytoplasm. Functionally, associates with the EF-Tu.GDP complex and induces the exchange of GDP to GTP. It remains bound to the aminoacyl-tRNA.EF-Tu.GTP complex up to the GTP hydrolysis stage on the ribosome. The protein is Elongation factor Ts of Mycoplasmopsis synoviae (strain 53) (Mycoplasma synoviae).